Reading from the N-terminus, the 187-residue chain is Interferon beta (187 aa).

Residues 1–21 (MTNKCLLQIALLLCFSTTALS) form the signal peptide. Residue tyrosine 24 is modified to Phosphotyrosine. A disulfide bond links cysteine 52 and cysteine 162. An N-linked (GlcNAc...) asparagine glycan is attached at asparagine 101.

Belongs to the alpha/beta interferon family. In terms of assembly, monomer.

Its subcellular location is the secreted. Type I interferon cytokine that plays a key role in the innate immune response to infection, developing tumors and other inflammatory stimuli. Signals via binding to high-affinity (IFNAR2) and low-affinity (IFNAR1) heterodimeric receptor, activating the canonical Jak-STAT signaling pathway resulting in transcriptional activation or repression of interferon-regulated genes that encode the effectors of the interferon response, such as antiviral proteins, regulators of cell proliferation and differentiation, and immunoregulatory proteins. Signals mostly via binding to a IFNAR1-IFNAR2 heterodimeric receptor, but can also function with IFNAR1 alone and independently of Jak-STAT pathways. Elicits a wide variety of responses, including antiviral and antibacterial activities, and can regulate the development of B-cells, myelopoiesis and lipopolysaccharide (LPS)-inducible production of tumor necrosis factor. Plays a role in neuronal homeostasis by regulating dopamine turnover and protecting dopaminergic neurons: acts by promoting neuronal autophagy and alpha-synuclein clearance, thereby preventing dopaminergic neuron loss. IFNB1 is more potent than interferon-alpha (IFN-alpha) in inducing the apoptotic and antiproliferative pathways required for control of tumor cell growth. This chain is Interferon beta (IFNB1), found in Macaca fascicularis (Crab-eating macaque).